We begin with the raw amino-acid sequence, 403 residues long: Histidine--tRNA ligase (403 aa).

It belongs to the class-II aminoacyl-tRNA synthetase family. In terms of assembly, homodimer.

Its subcellular location is the cytoplasm. The enzyme catalyses tRNA(His) + L-histidine + ATP = L-histidyl-tRNA(His) + AMP + diphosphate + H(+). The sequence is that of Histidine--tRNA ligase from Sulfurovum sp. (strain NBC37-1).